We begin with the raw amino-acid sequence, 104 residues long: uncharacterized protein (104 aa).

This is an uncharacterized protein from Invertebrate iridescent virus 3 (IIV-3).